A 203-amino-acid polypeptide reads, in one-letter code: uncharacterized protein (203 aa).

Transmembrane regions (helical) follow at residues 9–29 (YNVF…IVVA), 42–62 (FLFL…FFDV), 86–106 (SGVF…ALLV), and 126–146 (YPLL…SIGL). Basic and acidic residues-rich tracts occupy residues 164–174 (GEPTAADKTDS) and 182–191 (DQTKSKKDGD). The tract at residues 164-203 (GEPTAADKTDSRPVVVDLDQTKSKKDGDNPPQASGDMTSL) is disordered. Polar residues predominate over residues 194–203 (PQASGDMTSL).

It is found in the cell membrane. This is an uncharacterized protein from Mycoplasma pneumoniae (strain ATCC 29342 / M129 / Subtype 1) (Mycoplasmoides pneumoniae).